The sequence spans 212 residues: Prolactin-3C1 (212 aa).

Residues 1–29 form the signal peptide; the sequence is MQLSLTQARTWKGLFLLVSCMFLWVYVTA. The cysteines at positions 80 and 188 are disulfide-linked. Asn-100 carries an N-linked (GlcNAc...) asparagine glycan.

Belongs to the somatotropin/prolactin family. Expressed exclusively in decidua.

The protein resides in the secreted. This is Prolactin-3C1 (Prl3c1) from Mus musculus (Mouse).